Here is a 243-residue protein sequence, read N- to C-terminus: MAGHSKWANIQHRKGRQDAKRGKIFTKLIKEITVAAKMGGGDPAMNPRLRLAIEKGKAESLPKDNIENAIKRGTGQLEGVNYEEARYEGYGIGGVAVMVDCLTDNKTRTVADVRHAFTKHGGNMGTDGCVAFQFKHVGQIVLEPGASEEAVMEAALDAGADDVIPNDDGSIEVLTSPDPKAFEAVKEALEKAGFKPAVAEITMRPEAETELAGDDAAKMQKILDALESLDDVQEVYTNAVLPD.

It belongs to the TACO1 family.

It localises to the cytoplasm. The sequence is that of Probable transcriptional regulatory protein Tbd_2215 from Thiobacillus denitrificans (strain ATCC 25259 / T1).